We begin with the raw amino-acid sequence, 583 residues long: Ankyrin repeat-containing protein NPR4 (583 aa).

ANK repeat units follow at residues 68–97 (HNDT…AAVA), 119–148 (AGET…AEGV), 154–183 (SGYD…LLAK), 188–218 (ANTS…GLVE), 223–252 (NGKN…QLAR), 257–286 (KGQT…AIVM), and 291–321 (NGNT…HVNA). The next 4 helical transmembrane spans lie at 414–434 (VTVV…TVPG), 452–472 (IFFI…VVQI), 492–512 (LMWL…YIVL), and 518–538 (WAAL…LGTM).

The protein localises to the cell membrane. Functionally, involved in salt stress tolerance. The chain is Ankyrin repeat-containing protein NPR4 from Oryza sativa subsp. japonica (Rice).